The chain runs to 89 residues: Small ribosomal subunit protein uS15 (89 aa).

This sequence belongs to the universal ribosomal protein uS15 family. Part of the 30S ribosomal subunit. Forms a bridge to the 50S subunit in the 70S ribosome, contacting the 23S rRNA.

Functionally, one of the primary rRNA binding proteins, it binds directly to 16S rRNA where it helps nucleate assembly of the platform of the 30S subunit by binding and bridging several RNA helices of the 16S rRNA. Forms an intersubunit bridge (bridge B4) with the 23S rRNA of the 50S subunit in the ribosome. The polypeptide is Small ribosomal subunit protein uS15 (Pseudomonas entomophila (strain L48)).